The following is a 307-amino-acid chain: Acetaldehyde dehydrogenase 1 (307 aa).

The active-site Acyl-thioester intermediate is cysteine 132. Residues 163-171 (SVGPGTRKN) and asparagine 274 contribute to the NAD(+) site.

It belongs to the acetaldehyde dehydrogenase family.

The enzyme catalyses acetaldehyde + NAD(+) + CoA = acetyl-CoA + NADH + H(+). This is Acetaldehyde dehydrogenase 1 (tesF) from Comamonas testosteroni (Pseudomonas testosteroni).